Reading from the N-terminus, the 327-residue chain is uncharacterized protein (327 aa).

The 68-residue stretch at lysine 12 to glutamate 79 folds into the S4 RNA-binding domain. Aspartate 136 is a catalytic residue.

Belongs to the pseudouridine synthase RluA family.

It carries out the reaction a uridine in RNA = a pseudouridine in RNA. This is an uncharacterized protein from Helicobacter pylori (strain J99 / ATCC 700824) (Campylobacter pylori J99).